The primary structure comprises 436 residues: tRNA(Ile)-lysidine synthase (436 aa).

21–26 (SGGVDS) contributes to the ATP binding site.

It belongs to the tRNA(Ile)-lysidine synthase family.

The protein localises to the cytoplasm. It carries out the reaction cytidine(34) in tRNA(Ile2) + L-lysine + ATP = lysidine(34) in tRNA(Ile2) + AMP + diphosphate + H(+). In terms of biological role, ligates lysine onto the cytidine present at position 34 of the AUA codon-specific tRNA(Ile) that contains the anticodon CAU, in an ATP-dependent manner. Cytidine is converted to lysidine, thus changing the amino acid specificity of the tRNA from methionine to isoleucine. The chain is tRNA(Ile)-lysidine synthase from Aster yellows witches'-broom phytoplasma (strain AYWB).